The primary structure comprises 314 residues: Aspartate carbamoyltransferase catalytic subunit (314 aa).

Arginine 58 and threonine 59 together coordinate carbamoyl phosphate. L-aspartate is bound at residue lysine 86. Carbamoyl phosphate is bound by residues arginine 108, histidine 136, and glutamine 139. Arginine 169 and arginine 223 together coordinate L-aspartate. Carbamoyl phosphate is bound by residues glycine 264 and proline 265.

Belongs to the aspartate/ornithine carbamoyltransferase superfamily. ATCase family. Heterododecamer (2C3:3R2) of six catalytic PyrB chains organized as two trimers (C3), and six regulatory PyrI chains organized as three dimers (R2).

The catalysed reaction is carbamoyl phosphate + L-aspartate = N-carbamoyl-L-aspartate + phosphate + H(+). The protein operates within pyrimidine metabolism; UMP biosynthesis via de novo pathway; (S)-dihydroorotate from bicarbonate: step 2/3. Catalyzes the condensation of carbamoyl phosphate and aspartate to form carbamoyl aspartate and inorganic phosphate, the committed step in the de novo pyrimidine nucleotide biosynthesis pathway. The protein is Aspartate carbamoyltransferase catalytic subunit of Jannaschia sp. (strain CCS1).